Reading from the N-terminus, the 1377-residue chain is DNA-directed RNA polymerase subunit beta (1377 aa).

This sequence belongs to the RNA polymerase beta chain family. As to quaternary structure, the RNAP catalytic core consists of 2 alpha, 1 beta, 1 beta' and 1 omega subunit. When a sigma factor is associated with the core the holoenzyme is formed, which can initiate transcription.

The enzyme catalyses RNA(n) + a ribonucleoside 5'-triphosphate = RNA(n+1) + diphosphate. Functionally, DNA-dependent RNA polymerase catalyzes the transcription of DNA into RNA using the four ribonucleoside triphosphates as substrates. This chain is DNA-directed RNA polymerase subunit beta, found in Brucella melitensis biotype 2 (strain ATCC 23457).